A 198-amino-acid polypeptide reads, in one-letter code: MVEKKKSQAEKNNQSATEEEIEKAVKGSKRDSNAADEKNSASAAASSSAVSDAEPAVDYEDKFYRAEAEMQNMQQRFNKERASILKYEGQDLAKSILPALDNLERALSVSAGDPASKKIQDGVELTYKSLSNALTDNGIVKIGRAGDQFDPNLHNAIQKTPIDDPEKQKEGTIAVVLQKGYQLHDRVLRPAMVSVYTK.

Positions Met1 to Ala56 are disordered. The span at Glu22–Asn39 shows a compositional bias: basic and acidic residues. Residues Ser40 to Ala56 are compositionally biased toward low complexity.

The protein belongs to the GrpE family. Homodimer.

It localises to the cytoplasm. Its function is as follows. Participates actively in the response to hyperosmotic and heat shock by preventing the aggregation of stress-denatured proteins, in association with DnaK and GrpE. It is the nucleotide exchange factor for DnaK and may function as a thermosensor. Unfolded proteins bind initially to DnaJ; upon interaction with the DnaJ-bound protein, DnaK hydrolyzes its bound ATP, resulting in the formation of a stable complex. GrpE releases ADP from DnaK; ATP binding to DnaK triggers the release of the substrate protein, thus completing the reaction cycle. Several rounds of ATP-dependent interactions between DnaJ, DnaK and GrpE are required for fully efficient folding. This is Protein GrpE from Oenococcus oeni (strain ATCC BAA-331 / PSU-1).